Consider the following 587-residue polypeptide: Phosphatidylinositol-3-phosphatase SAC1 (587 aa).

The Cytoplasmic segment spans residues 1 to 520 (MATAAYEQLK…SPLSVPRDWK (520 aa)). Positions 122–451 (LNHVLNVDGF…ANACAKQYAG (330 aa)) constitute an SAC domain. Positions 452 to 587 (TGALKTDFTR…PRLVQKEKID (136 aa)) are essential for phosphatidylinositol-4-phosphate phosphatase activity. Residue lysine 456 is modified to N6-acetyllysine. Residues 521–541 (FLALPIIMVVAFSMCIICLLM) form a helical membrane-spanning segment. Over 542 to 548 (AGDTWTE) the chain is Lumenal. Residues 549 to 569 (TLAYVLFWGVASIGTFFIILY) form a helical membrane-spanning segment. Over 570–587 (NGKDFVDAPRLVQKEKID) the chain is Cytoplasmic.

As to quaternary structure, interacts with TMEM39A. Interacts with SEC23A and SEC24A; this interaction is reduced in the absence of TMEM39A. Interacts with PLEKHA3 and VAPA and/or VAPB to form a ternary complex.

It is found in the endoplasmic reticulum membrane. Its subcellular location is the golgi apparatus membrane. It carries out the reaction a 1,2-diacyl-sn-glycero-3-phospho-(1D-myo-inositol-3-phosphate) + H2O = a 1,2-diacyl-sn-glycero-3-phospho-(1D-myo-inositol) + phosphate. The enzyme catalyses a 1,2-diacyl-sn-glycero-3-phospho-(1D-myo-inositol 4-phosphate) + H2O = a 1,2-diacyl-sn-glycero-3-phospho-(1D-myo-inositol) + phosphate. In terms of biological role, phosphoinositide phosphatase which catalyzes the hydrolysis of phosphatidylinositol 4-phosphate (PtdIns(4)P), phosphatidylinositol 3-phosphate (PtdIns(3)P) and has low activity towards phosphatidylinositol-3,5-bisphosphate (PtdIns(3,5)P2). Shows a very robust PtdIns(4)P phosphatase activity when it binds PtdIns(4)P in a 'cis' configuration in the cellular environment, with much less activity seen when it binds PtdIns(4)P in 'trans' configuration. PtdIns(4)P phosphatase activity (when it binds PtdIns(4)P in 'trans' configuration) is enhanced in the presence of PLEKHA3. The protein is Phosphatidylinositol-3-phosphatase SAC1 (SACM1L) of Pongo abelii (Sumatran orangutan).